The chain runs to 523 residues: Glutamate--cysteine ligase (523 aa).

It belongs to the glutamate--cysteine ligase type 1 family. Type 1 subfamily.

It catalyses the reaction L-cysteine + L-glutamate + ATP = gamma-L-glutamyl-L-cysteine + ADP + phosphate + H(+). It functions in the pathway sulfur metabolism; glutathione biosynthesis; glutathione from L-cysteine and L-glutamate: step 1/2. The sequence is that of Glutamate--cysteine ligase from Shewanella oneidensis (strain ATCC 700550 / JCM 31522 / CIP 106686 / LMG 19005 / NCIMB 14063 / MR-1).